Consider the following 230-residue polypeptide: MRQYTSKSILFMTAIALSACSHLPQTTSQGATVVSAQTVTQALGVDLASLEQKATALKPFEYIHNQDHYIAYLSTQPELIKVQKNGQLAKFFYQAGKVSFVQDKTGVYQFNQSGDVIAAIDANGKKQHANPADSKALWHKASQLQKLFGYNKADASAGRVKTGSDAKVNYLCIAKIQQVAQTNRVFRSPENAVVTENQIKATVRLNGNQYYNMDCQLSGDKVSKLSLMKK.

Positions 1–18 (MRQYTSKSILFMTAIALS) are cleaved as a signal peptide.

This is an uncharacterized protein from Pasteurella multocida (strain Pm70).